We begin with the raw amino-acid sequence, 221 residues long: H-2 class II histocompatibility antigen, A-Q alpha chain (221 aa).

The tract at residues 1-76 (GIVVYQSPGD…KRSNFTPATN (76 aa)) is alpha-1. Residues 1 to 183 (GIVVYQSPGD…IPAPMSELTE (183 aa)) are Extracellular-facing. The interval 77-170 (EAPQATVFPK…GLDEPVLKHW (94 aa)) is alpha-2. The region spanning 79 to 171 (PQATVFPKSP…LDEPVLKHWE (93 aa)) is the Ig-like C1-type domain. Cys99 and Cys155 are oxidised to a cystine. Asn110 is a glycosylation site (N-linked (GlcNAc...) asparagine). Residues 171-183 (EPEIPAPMSELTE) form a connecting peptide region. Residues 184–209 (TVVCALGLSVGLVGIVVGTIFIIQGL) form a helical membrane-spanning segment. The Cytoplasmic portion of the chain corresponds to 210–221 (RSGGTSRPPGPL).

It belongs to the MHC class II family.

Its subcellular location is the membrane. This Mus musculus (Mouse) protein is H-2 class II histocompatibility antigen, A-Q alpha chain (H2-Aa).